The sequence spans 398 residues: uncharacterized protein (398 aa).

The residue at position 212 (lysine 212) is an N6-(pyridoxal phosphate)lysine.

The protein belongs to the trans-sulfuration enzymes family. It depends on pyridoxal 5'-phosphate as a cofactor.

This is an uncharacterized protein from Schizosaccharomyces pombe (strain 972 / ATCC 24843) (Fission yeast).